We begin with the raw amino-acid sequence, 108 residues long: Nucleoid-associated protein Bphyt_1827 (108 aa).

The segment at 87-108 is disordered; it reads AQEKMGGMTSGLPLPPGFKLPF. Pro residues predominate over residues 99 to 108; it reads PLPPGFKLPF.

The protein belongs to the YbaB/EbfC family. As to quaternary structure, homodimer.

The protein resides in the cytoplasm. The protein localises to the nucleoid. Functionally, binds to DNA and alters its conformation. May be involved in regulation of gene expression, nucleoid organization and DNA protection. This is Nucleoid-associated protein Bphyt_1827 from Paraburkholderia phytofirmans (strain DSM 17436 / LMG 22146 / PsJN) (Burkholderia phytofirmans).